The primary structure comprises 121 residues: RxLR effector protein PexRD2 (121 aa).

Residues Met1–Ala20 form the signal peptide. The RxLR-dEER motif lies at Arg38–Arg56. Residues Ala57 to Val121 form a WY domain region.

This sequence belongs to the RxLR effector family. In terms of assembly, homodimer. Interacts with host MAPKKK epsilon (via its kinase domain).

It localises to the secreted. The protein localises to the host cytoplasm. The protein resides in the host nucleus. Functionally, effector that enhances P.infestans colonization of Nicotiana benthamiana leaves. Induces a weak Cell death response in N.benthamiana. PexRD2-induced cell death is dependent on SGT1, suggesting that PexRD2 is recognized by the plant immune system. Interacts with the kinase domain of the host MAPKKK epsilon, a positive regulator of cell death associated with plant immunity, and perturbs signaling pathways triggered by MAPKKK epsilon. This is RxLR effector protein PexRD2 from Phytophthora infestans (strain T30-4) (Potato late blight agent).